A 428-amino-acid polypeptide reads, in one-letter code: Somatostatin receptor type 3 (428 aa).

Positions 1-12 (MATVTYPSSEPT) are enriched in polar residues. The tract at residues 1–20 (MATVTYPSSEPTTLDPGNAS) is disordered. The Extracellular portion of the chain corresponds to 1-45 (MATVTYPSSEPTTLDPGNASSTWPLDTTLGNTSAGASLTGLAVSG). 2 N-linked (GlcNAc...) asparagine glycosylation sites follow: Asn-18 and Asn-31. A helical membrane pass occupies residues 46–71 (ILISLVYLVVCVVGLLGNSLVIYVVL). The Cytoplasmic segment spans residues 72 to 81 (RHTSSPSVTS). Residues 82-103 (VYILNLALADELFMLGLPFLAA) form a helical membrane-spanning segment. Over 104 to 118 (QNALSYWPFGSLMCR) the chain is Extracellular. The cysteines at positions 117 and 192 are disulfide-linked. Residues 119-140 (LVMAVDGINQFTSIFCLTVMSV) form a helical membrane-spanning segment. Topologically, residues 141-162 (DRYLAVVHPTRSARWRTAPVAR) are cytoplasmic. A helical membrane pass occupies residues 163-182 (TVSAAVWVASAVVVLPVVVF). Over 183–206 (SGVPRGMSTCHMQWPEPAAAWRTA) the chain is Extracellular. Residues 207–232 (FIIYTAALGFFGPLLVICLCYLLIVV) form a helical membrane-spanning segment. The Cytoplasmic segment spans residues 233-266 (KVRSTTRRVRAPSCQWVQAPACQRRRRSERRVTR). Residues 267 to 288 (MVVAVVALFVLCWMPFYLLNIV) form a helical membrane-spanning segment. Residues 289-302 (NVVCPLPEEPAFFG) are Extracellular-facing. A helical transmembrane segment spans residues 303–325 (LYFLVVALPYANSCANPILYGFL). Topologically, residues 326–428 (SYRFKQGFRR…GDKASTLSHL (103 aa)) are cytoplasmic. Phosphoserine is present on residues Ser-341, Ser-346, and Ser-351. The tract at residues 344–428 (IRSQEPGSGP…GDKASTLSHL (85 aa)) is disordered. Position 357 is a phosphothreonine (Thr-357). Positions 357–370 (TEEEEDEEEEERRE) are enriched in acidic residues. Polar residues predominate over residues 385-412 (RLSQIAQAGTSGQQPRPCTGTAKEQQLL).

The protein belongs to the G-protein coupled receptor 1 family. Homodimer and heterodimer with SSTR2. Heterodimerization with SSTR2 inactivates SSTR3 receptor function. Phosphorylated. Phosphorylation increases upon somatostatin binding. As to expression, in the brain, primarily observed in the forebrain. Moderate levels found throughout laminae 2-6 of the neocortex and allocortex, and high levels in lamina 2 of the piriform and entorhinal cortices. High levels also present in the cornu ammonis fields of the hippocampus. In the amygdala, highly expressed in the nucleus of the lateral olfactory tract with expression also detected in the rostral portions of the basal magnocellular and lateral nuclei. In the diencephalon, moderate levels observed in the ventromedial and arcuate nuclei of the hypothalamus. In the midbrain, moderate levels found in the lateral portion of the substantia nigra pars reticulata.

It localises to the cell membrane. Receptor for somatostatin-14 and -28. This receptor is coupled via pertussis toxin sensitive G proteins to inhibition of adenylyl cyclase. The sequence is that of Somatostatin receptor type 3 (Sstr3) from Mus musculus (Mouse).